Reading from the N-terminus, the 440-residue chain is Frizzled/smoothened-like sans CRD protein D (440 aa).

An N-terminal signal peptide occupies residues 1–27 (MFIILKFLISFFLICNFFNYNDHFASG). Topologically, residues 28 to 85 (QTLPPGFCPSPLIYRNSTNRQNDIENGYLFIGQTNCTSPCPSLIFSENEWHRVYNMSL) are extracellular. 3 N-linked (GlcNAc...) asparagine glycosylation sites follow: asparagine 43, asparagine 62, and asparagine 82. A helical transmembrane segment spans residues 86–106 (IAGTISMFALIFLIITYSPLV). Over 107–110 (NKYN) the chain is Cytoplasmic. The helical transmembrane segment at 111-131 (GYTRHTVGILFLFCGIFLTVT) threads the bilayer. At 132 to 162 (TDGRQLWDIDLGFEKYCPEPGRFARQSDTKC) the chain is on the extracellular side. A helical transmembrane segment spans residues 163-183 (LVTAIFFQYGCVTSILWWAAI). Residues 184 to 200 (SVDLWMTIRKVKISKLQ) are Cytoplasmic-facing. Residues 201–221 (FITYAVILNIITLILTFAPIA) traverse the membrane as a helical segment. Over 222–244 (SKQYGYGEAAIGCWLMDLKYQVG) the chain is Extracellular. Residues 245–265 (YFWAPVGFCLCVGCVSIVLII) traverse the membrane as a helical segment. The Cytoplasmic segment spans residues 266–285 (REIYKVSDAIKKKLLAKHLK). Residues 286–306 (PLMLIILMLSEFIYMFIFYSY) traverse the membrane as a helical segment. At 307-346 (TTSRRGHYHDVVEKYIRCLFINASNPSICEVDVSISSPAH) the chain is on the extracellular side. Asparagine 328 carries N-linked (GlcNAc...) asparagine glycosylation. The helical transmembrane segment at 347–367 (FFFHFCMRLMGIEGLIFFGFT) threads the bilayer. Over 368–440 (RQTKRIWLRS…IELSGVDSKN (73 aa)) the chain is Cytoplasmic. Residues 395 to 428 (ISSDEKTSNSSHRTTRGCRETEFGESIEQSNDPE) are disordered.

The protein belongs to the G-protein coupled receptor Fz/Smo family.

Its subcellular location is the membrane. In Dictyostelium discoideum (Social amoeba), this protein is Frizzled/smoothened-like sans CRD protein D (fscD).